The chain runs to 66 residues: Large ribosomal subunit protein bL33c (66 aa).

It belongs to the bacterial ribosomal protein bL33 family.

It localises to the plastid. Its subcellular location is the chloroplast. In Populus alba (White poplar), this protein is Large ribosomal subunit protein bL33c.